The following is a 406-amino-acid chain: Phloroisovalerophenone synthase (406 aa).

Residue C171 is part of the active site.

Belongs to the thiolase-like superfamily. Chalcone/stilbene synthases family.

It catalyses the reaction 3-methylbutanoyl-CoA + 3 malonyl-CoA + 3 H(+) = phlorisovalerophenone + 3 CO2 + 4 CoA. In terms of biological role, produces 3-methyl-1-(2,4,6-trihydroxyphenyl)butan-1-one (phloroisovalerophenone). The sequence is that of Phloroisovalerophenone synthase (VPS) from Psilotum nudum (Whisk fern).